The chain runs to 364 residues: Chorismate synthase (364 aa).

An NADP(+)-binding site is contributed by Arg-47. Residues 125-127 (RAS), Gly-288, 303-307 (KPTAT), and Arg-329 contribute to the FMN site.

The protein belongs to the chorismate synthase family. Homotetramer. The cofactor is FMNH2.

The catalysed reaction is 5-O-(1-carboxyvinyl)-3-phosphoshikimate = chorismate + phosphate. Its pathway is metabolic intermediate biosynthesis; chorismate biosynthesis; chorismate from D-erythrose 4-phosphate and phosphoenolpyruvate: step 7/7. Catalyzes the anti-1,4-elimination of the C-3 phosphate and the C-6 proR hydrogen from 5-enolpyruvylshikimate-3-phosphate (EPSP) to yield chorismate, which is the branch point compound that serves as the starting substrate for the three terminal pathways of aromatic amino acid biosynthesis. This reaction introduces a second double bond into the aromatic ring system. This is Chorismate synthase from Synechococcus sp. (strain CC9605).